The sequence spans 178 residues: Cell division protein SepF (178 aa).

Residues 21–46 show a composition bias toward basic and acidic residues; that stretch reads YESEQSVATHHDEERPQAQEREERRA. Residues 21–65 form a disordered region; the sequence is YESEQSVATHHDEERPQAQEREERRAPAPVREVVREMPTVDAEEE.

The protein belongs to the SepF family. Homodimer. Interacts with FtsZ.

Its subcellular location is the cytoplasm. In terms of biological role, cell division protein that is part of the divisome complex and is recruited early to the Z-ring. Probably stimulates Z-ring formation, perhaps through the cross-linking of FtsZ protofilaments. Its function overlaps with FtsA. The protein is Cell division protein SepF of Paenarthrobacter aurescens (strain TC1).